A 164-amino-acid chain; its full sequence is 3-isopropylmalate dehydratase small subunit 1 (164 aa).

It belongs to the LeuD family. LeuD type 2 subfamily. In terms of assembly, heterodimer of LeuC and LeuD.

The enzyme catalyses (2R,3S)-3-isopropylmalate = (2S)-2-isopropylmalate. It participates in amino-acid biosynthesis; L-leucine biosynthesis; L-leucine from 3-methyl-2-oxobutanoate: step 2/4. In terms of biological role, catalyzes the isomerization between 2-isopropylmalate and 3-isopropylmalate, via the formation of 2-isopropylmaleate. In Pyrococcus furiosus (strain ATCC 43587 / DSM 3638 / JCM 8422 / Vc1), this protein is 3-isopropylmalate dehydratase small subunit 1 (leuD1).